The primary structure comprises 152 residues: 3-dehydroquinate dehydratase (152 aa).

Tyrosine 22 functions as the Proton acceptor in the catalytic mechanism. Residues asparagine 73, histidine 79, and aspartate 86 each contribute to the substrate site. Residue histidine 99 is the Proton donor of the active site. Residues 100-101 (LS) and arginine 110 each bind substrate.

Belongs to the type-II 3-dehydroquinase family. In terms of assembly, homododecamer.

It catalyses the reaction 3-dehydroquinate = 3-dehydroshikimate + H2O. It functions in the pathway metabolic intermediate biosynthesis; chorismate biosynthesis; chorismate from D-erythrose 4-phosphate and phosphoenolpyruvate: step 3/7. In terms of biological role, catalyzes a trans-dehydration via an enolate intermediate. This Gemmatimonas aurantiaca (strain DSM 14586 / JCM 11422 / NBRC 100505 / T-27) protein is 3-dehydroquinate dehydratase.